The sequence spans 226 residues: PKHD-type hydroxylase MADE_1018490 (226 aa).

The 101-residue stretch at 77–177 (RIFPPCFNRY…RIAAITWIQS (101 aa)) folds into the Fe2OG dioxygenase domain. The Fe cation site is built by histidine 95, aspartate 97, and histidine 158. A 2-oxoglutarate-binding site is contributed by arginine 168.

Requires Fe(2+) as cofactor. It depends on L-ascorbate as a cofactor.

The protein is PKHD-type hydroxylase MADE_1018490 of Alteromonas mediterranea (strain DSM 17117 / CIP 110805 / LMG 28347 / Deep ecotype).